A 369-amino-acid chain; its full sequence is MSTGLRYKSKLATPEDKQDIDKQYVGFATLPNQVHRKSVKKGFDFTLMVAGESGLGKSTLVHSLFLTDLYKDRKLLSAEERINQTVEILKHTVDIEEKGVKLKLTIVDTPGFGDAVNNFECWKPITDYVDQQFEQYFRDESGLNRKNIQDNRVHCCLYFISPFGHGLRPVDVGFMKALHEKVNIVPLIAKADCLVPSEIRKLKDRIREEIDKFGIHVYQFPECDSDEDEDFKQQDRELKESAPFAVIGSNTVVEAKGQRVRGRLYPWGIVEVENQAHCDFVKLRNMLIRTHMHDLKDVTCDVHYENYRAHCIQQMTSKLTQDSRMESPIPILPLPTPDSETEKLIRMKDEELRRMQEMLQKMKQRMQDQ.

A Phosphothreonine modification is found at T13. A Septin-type G domain is found at 41-314 (KGFDFTLMVA…ENYRAHCIQQ (274 aa)). Positions 51 to 58 (GESGLGKS) are G1 motif. GTP-binding positions include 51–58 (GESGLGKS), T85, and G111. Residues 108–111 (DTPG) are G3 motif. At R168 the chain carries Omega-N-methylarginine. Residues 189–192 (AKAD) are G4 motif. Residue 190–198 (KADCLVPSE) participates in GTP binding. S225 is modified (phosphoserine). 2 residues coordinate GTP: G248 and R263. Residue S327 is modified to Phosphoserine. The residue at position 336 (T336) is a Phosphothreonine. Residues 338 to 369 (DSETEKLIRMKDEELRRMQEMLQKMKQRMQDQ) adopt a coiled-coil conformation.

Belongs to the TRAFAC class TrmE-Era-EngA-EngB-Septin-like GTPase superfamily. Septin GTPase family. In terms of assembly, septins polymerize into heterooligomeric protein complexes that form filaments, and can associate with cellular membranes, actin filaments and microtubules. GTPase activity is required for filament formation. Interacts with SEPTIN2 and SEPTIN5. In platelets, associated with a complex containing STX4. Interacts with PRKN; this interaction leads to SEPTIN5 ubiquitination and degradation. Interacts with DYRK1A. Interacts with STX1A; in the cerebellar cortex. In terms of processing, phosphorylated by DYRK1A. As to expression, expressed in brain and testis and at lower level in heart, spleen, lung and kidney.

Its subcellular location is the cytoplasm. The protein resides in the cytoskeleton. Filament-forming cytoskeletal GTPase. May play a role in cytokinesis (Potential). May play a role in platelet secretion. The sequence is that of Septin-5 from Rattus norvegicus (Rat).